The chain runs to 941 residues: Bifunctional glutamine synthetase adenylyltransferase/adenylyl-removing enzyme (941 aa).

The segment at 1-431 (MSSAPPFAAA…TFRNAFRLAG (431 aa)) is adenylyl removase. Residues 447–941 (NGHGMRPHAG…DGTIAQAEVK (495 aa)) are adenylyl transferase.

The protein belongs to the GlnE family. It depends on Mg(2+) as a cofactor.

It catalyses the reaction [glutamine synthetase]-O(4)-(5'-adenylyl)-L-tyrosine + phosphate = [glutamine synthetase]-L-tyrosine + ADP. It carries out the reaction [glutamine synthetase]-L-tyrosine + ATP = [glutamine synthetase]-O(4)-(5'-adenylyl)-L-tyrosine + diphosphate. In terms of biological role, involved in the regulation of glutamine synthetase GlnA, a key enzyme in the process to assimilate ammonia. When cellular nitrogen levels are high, the C-terminal adenylyl transferase (AT) inactivates GlnA by covalent transfer of an adenylyl group from ATP to specific tyrosine residue of GlnA, thus reducing its activity. Conversely, when nitrogen levels are low, the N-terminal adenylyl removase (AR) activates GlnA by removing the adenylyl group by phosphorolysis, increasing its activity. The regulatory region of GlnE binds the signal transduction protein PII (GlnB) which indicates the nitrogen status of the cell. In Bordetella bronchiseptica (strain ATCC BAA-588 / NCTC 13252 / RB50) (Alcaligenes bronchisepticus), this protein is Bifunctional glutamine synthetase adenylyltransferase/adenylyl-removing enzyme.